We begin with the raw amino-acid sequence, 209 residues long: Ribonuclease HII (209 aa).

The RNase H type-2 domain maps to 18–209 (GLVAGVDEVG…FKPVKALLER (192 aa)). A divalent metal cation-binding residues include D24, E25, and D116.

Belongs to the RNase HII family. The cofactor is Mn(2+). Mg(2+) is required as a cofactor.

Its subcellular location is the cytoplasm. It carries out the reaction Endonucleolytic cleavage to 5'-phosphomonoester.. Endonuclease that specifically degrades the RNA of RNA-DNA hybrids. In Shewanella sp. (strain ANA-3), this protein is Ribonuclease HII.